A 412-amino-acid polypeptide reads, in one-letter code: Multifunctional CCA protein (412 aa).

Residues glycine 8 and arginine 11 each coordinate ATP. Glycine 8 and arginine 11 together coordinate CTP. Aspartate 21 and aspartate 23 together coordinate Mg(2+). 3 residues coordinate ATP: arginine 91, arginine 137, and arginine 140. The CTP site is built by arginine 91, arginine 137, and arginine 140. The HD domain occupies 228–329; the sequence is TGIHTLMTLS…VKLFDSIDAW (102 aa).

Belongs to the tRNA nucleotidyltransferase/poly(A) polymerase family. Bacterial CCA-adding enzyme type 1 subfamily. Monomer. Can also form homodimers and oligomers. Requires Mg(2+) as cofactor. Ni(2+) serves as cofactor.

It catalyses the reaction a tRNA precursor + 2 CTP + ATP = a tRNA with a 3' CCA end + 3 diphosphate. The catalysed reaction is a tRNA with a 3' CCA end + 2 CTP + ATP = a tRNA with a 3' CCACCA end + 3 diphosphate. Functionally, catalyzes the addition and repair of the essential 3'-terminal CCA sequence in tRNAs without using a nucleic acid template. Adds these three nucleotides in the order of C, C, and A to the tRNA nucleotide-73, using CTP and ATP as substrates and producing inorganic pyrophosphate. tRNA 3'-terminal CCA addition is required both for tRNA processing and repair. Also involved in tRNA surveillance by mediating tandem CCA addition to generate a CCACCA at the 3' terminus of unstable tRNAs. While stable tRNAs receive only 3'-terminal CCA, unstable tRNAs are marked with CCACCA and rapidly degraded. The polypeptide is Multifunctional CCA protein (Escherichia coli O6:K15:H31 (strain 536 / UPEC)).